The primary structure comprises 483 residues: Ribulose bisphosphate carboxylase large chain (483 aa).

The propeptide occupies 1 to 2 (MS). Substrate is bound by residues Asn123 and Thr173. The active-site Proton acceptor is the Lys175. A substrate-binding site is contributed by Lys177. Positions 201, 203, and 204 each coordinate Mg(2+). Lys201 is modified (N6-carboxylysine). Position 208 is a phosphoserine (Ser208). His294 functions as the Proton acceptor in the catalytic mechanism. Substrate contacts are provided by Arg295 and His327. Phosphothreonine is present on Thr330. Ser379 contacts substrate.

This sequence belongs to the RuBisCO large chain family. Type I subfamily. Heterohexadecamer of 8 large chains and 8 small chains; disulfide-linked. The disulfide link is formed within the large subunit homodimers. Requires Mg(2+) as cofactor. Post-translationally, the disulfide bond which can form in the large chain dimeric partners within the hexadecamer appears to be associated with oxidative stress and protein turnover.

Its subcellular location is the plastid. It localises to the chloroplast. It catalyses the reaction 2 (2R)-3-phosphoglycerate + 2 H(+) = D-ribulose 1,5-bisphosphate + CO2 + H2O. It carries out the reaction D-ribulose 1,5-bisphosphate + O2 = 2-phosphoglycolate + (2R)-3-phosphoglycerate + 2 H(+). In terms of biological role, ruBisCO catalyzes two reactions: the carboxylation of D-ribulose 1,5-bisphosphate, the primary event in carbon dioxide fixation, as well as the oxidative fragmentation of the pentose substrate in the photorespiration process. Both reactions occur simultaneously and in competition at the same active site. The chain is Ribulose bisphosphate carboxylase large chain from Aethionema cordifolium (Lebanon stonecress).